The sequence spans 100 residues: Protein Tat (100 aa).

The segment at 1–24 is interaction with human CREBBP; the sequence is MDPIDPDLEPWKHPGSQPRTVCNN. A transactivation region spans residues 1–48; that stretch reads MDPIDPDLEPWKHPGSQPRTVCNNCYCKACCYHCIYCFTKKGLGISYG. Zn(2+)-binding residues include cysteine 22, cysteine 25, and cysteine 27. The segment at 22–37 is cysteine-rich; sequence CNNCYCKACCYHCIYC. Position 28 is an N6-acetyllysine; by host PCAF (lysine 28). Zn(2+)-binding residues include cysteine 30, histidine 33, cysteine 34, and cysteine 37. The tract at residues 38-48 is core; sequence FTKKGLGISYG. Basic residues predominate over residues 48 to 58; it reads GRKKRTTRRRT. The tract at residues 48 to 100 is disordered; the sequence is GRKKRTTRRRTAPAGSKNNQDSIPKQPLSQSRGNKEGSEKSTKEVASKTEADQ. A Nuclear localization signal, RNA-binding (TAR), and protein transduction motif is present at residues 49 to 57; it reads RKKRTTRRR. An interaction with the host capping enzyme RNGTT region spans residues 49–87; sequence RKKRTTRRRTAPAGSKNNQDSIPKQPLSQSRGNKEGSEK. An N6-acetyllysine; by host EP300 and GCN5L2 mark is found at lysine 50 and lysine 51. Residue arginine 52 is modified to Asymmetric dimethylarginine; by host PRMT6. The span at 63–79 shows a compositional bias: polar residues; that stretch reads SKNNQDSIPKQPLSQSR. Lysine 72 participates in a covalent cross-link: Glycyl lysine isopeptide (Lys-Gly) (interchain with G-Cter in ubiquitin). Basic and acidic residues predominate over residues 80-100; the sequence is GNKEGSEKSTKEVASKTEADQ.

This sequence belongs to the lentiviruses Tat family. Interacts with host CCNT1. Associates with the P-TEFb complex composed at least of Tat, P-TEFb (CDK9 and CCNT1), TAR RNA, RNA Pol II. Recruits the HATs CREBBP, TAF1/TFIID, EP300, PCAF and GCN5L2. Interacts with host KAT5/Tip60; this interaction targets the latter to degradation. Interacts with the host deacetylase SIRT1. Interacts with host capping enzyme RNGTT; this interaction stimulates RNGTT. Binds to host KDR, and to the host integrins ITGAV/ITGB3 and ITGA5/ITGB1. Interacts with host KPNB1/importin beta-1 without previous binding to KPNA1/importin alpha-1. Interacts with EIF2AK2. Interacts with host nucleosome assembly protein NAP1L1; this interaction may be required for the transport of Tat within the nucleus, since the two proteins interact at the nuclear rim. Interacts with host C1QBP/SF2P32; this interaction involves lysine-acetylated Tat. Interacts with the host chemokine receptors CCR2, CCR3 and CXCR4. Interacts with host DPP4/CD26; this interaction may trigger an anti-proliferative effect. Interacts with host LDLR. Interacts with the host extracellular matrix metalloproteinase MMP1. Interacts with host PRMT6; this interaction mediates Tat's methylation. Interacts with, and is ubiquitinated by MDM2/Hdm2. Interacts with host PSMC3 and HTATIP2. Interacts with STAB1; this interaction may overcome SATB1-mediated repression of IL2 and IL2RA (interleukin) in T cells by binding to the same domain than HDAC1. Interacts (when acetylated) with human CDK13, thereby increasing HIV-1 mRNA splicing and promoting the production of the doubly spliced HIV-1 protein Nef. Interacts with host TBP; this interaction modulates the activity of transcriptional pre-initiation complex. Interacts with host RELA. In terms of processing, asymmetrical arginine methylation by host PRMT6 seems to diminish the transactivation capacity of Tat and affects the interaction with host CCNT1. Acetylation by EP300, CREBBP, GCN5L2/GCN5 and PCAF regulates the transactivation activity of Tat. EP300-mediated acetylation of Lys-50 promotes dissociation of Tat from the TAR RNA through the competitive binding to PCAF's bromodomain. In addition, the non-acetylated Tat's N-terminus can also interact with PCAF. PCAF-mediated acetylation of Lys-28 enhances Tat's binding to CCNT1. Lys-50 is deacetylated by SIRT1. Post-translationally, polyubiquitination by host MDM2 does not target Tat to degradation, but activates its transactivation function and fosters interaction with CCNT1 and TAR RNA. In terms of processing, phosphorylated by EIF2AK2 on serine and threonine residues adjacent to the basic region important for TAR RNA binding and function. Phosphorylation of Tat by EIF2AK2 is dependent on the prior activation of EIF2AK2 by dsRNA.

It is found in the host nucleus. The protein localises to the host nucleolus. The protein resides in the host cytoplasm. It localises to the secreted. Transcriptional activator that increases RNA Pol II processivity, thereby increasing the level of full-length viral transcripts. Recognizes a hairpin structure at the 5'-LTR of the nascent viral mRNAs referred to as the transactivation responsive RNA element (TAR) and recruits the cyclin T1-CDK9 complex (P-TEFb complex) that will in turn hyperphosphorylate the RNA polymerase II to allow efficient elongation. The CDK9 component of P-TEFb and other Tat-activated kinases hyperphosphorylate the C-terminus of RNA Pol II that becomes stabilized and much more processive. Other factors such as HTATSF1/Tat-SF1, SUPT5H/SPT5, and HTATIP2 are also important for Tat's function. Besides its effect on RNA Pol II processivity, Tat induces chromatin remodeling of proviral genes by recruiting the histone acetyltransferases (HATs) CREBBP, EP300 and PCAF to the chromatin. This also contributes to the increase in proviral transcription rate, especially when the provirus integrates in transcriptionally silent region of the host genome. To ensure maximal activation of the LTR, Tat mediates nuclear translocation of NF-kappa-B by interacting with host RELA. Through its interaction with host TBP, Tat may also modulate transcription initiation. Tat can reactivate a latently infected cell by penetrating in it and transactivating its LTR promoter. In the cytoplasm, Tat is thought to act as a translational activator of HIV-1 mRNAs. Its function is as follows. Extracellular circulating Tat can be endocytosed by surrounding uninfected cells via the binding to several surface receptors such as CD26, CXCR4, heparan sulfate proteoglycans (HSPG) or LDLR. Neurons are rarely infected, but they internalize Tat via their LDLR. Through its interaction with nuclear HATs, Tat is potentially able to control the acetylation-dependent cellular gene expression. Modulates the expression of many cellular genes involved in cell survival, proliferation or in coding for cytokines or cytokine receptors. Tat plays a role in T-cell and neurons apoptosis. Tat induced neurotoxicity and apoptosis probably contribute to neuroAIDS. Circulating Tat also acts as a chemokine-like and/or growth factor-like molecule that binds to specific receptors on the surface of the cells, affecting many cellular pathways. In the vascular system, Tat binds to ITGAV/ITGB3 and ITGA5/ITGB1 integrins dimers at the surface of endothelial cells and competes with bFGF for heparin-binding sites, leading to an excess of soluble bFGF. This chain is Protein Tat, found in Pan (chimpanzees).